The chain runs to 1103 residues: Mediator of RNA polymerase II transcription subunit 14 (1103 aa).

Disordered regions lie at residues methionine 1–glutamine 63, valine 120–glutamine 140, and leucine 1054–aspartate 1103. Residues serine 1073 to aspartate 1103 show a composition bias toward polar residues.

The protein belongs to the Mediator complex subunit 14 family. Component of the Mediator complex.

The protein resides in the nucleus. Component of the Mediator complex, a coactivator involved in the regulated transcription of nearly all RNA polymerase II-dependent genes. Mediator functions as a bridge to convey information from gene-specific regulatory proteins to the basal RNA polymerase II transcription machinery. Mediator is recruited to promoters by direct interactions with regulatory proteins and serves as a scaffold for the assembly of a functional preinitiation complex with RNA polymerase II and the general transcription factors. The chain is Mediator of RNA polymerase II transcription subunit 14 (rgr1) from Aspergillus terreus (strain NIH 2624 / FGSC A1156).